A 172-amino-acid chain; its full sequence is ATP synthase subunit b, chloroplastic (172 aa).

A helical transmembrane segment spans residues 15-37 (ILATNLINLSAVLGVLIFFGKGV).

Belongs to the ATPase B chain family. As to quaternary structure, F-type ATPases have 2 components, F(1) - the catalytic core - and F(0) - the membrane proton channel. F(1) has five subunits: alpha(3), beta(3), gamma(1), delta(1), epsilon(1). F(0) has four main subunits: a(1), b(1), b'(1) and c(10-14). The alpha and beta chains form an alternating ring which encloses part of the gamma chain. F(1) is attached to F(0) by a central stalk formed by the gamma and epsilon chains, while a peripheral stalk is formed by the delta, b and b' chains.

It localises to the plastid. It is found in the chloroplast thylakoid membrane. Functionally, f(1)F(0) ATP synthase produces ATP from ADP in the presence of a proton or sodium gradient. F-type ATPases consist of two structural domains, F(1) containing the extramembraneous catalytic core and F(0) containing the membrane proton channel, linked together by a central stalk and a peripheral stalk. During catalysis, ATP synthesis in the catalytic domain of F(1) is coupled via a rotary mechanism of the central stalk subunits to proton translocation. In terms of biological role, component of the F(0) channel, it forms part of the peripheral stalk, linking F(1) to F(0). In Pisum sativum (Garden pea), this protein is ATP synthase subunit b, chloroplastic.